The primary structure comprises 262 residues: Elongator complex protein 5 (262 aa).

Disordered stretches follow at residues 181–214 and 229–262; these read TPLD…FKIE and PYER…DLCI. Positions 200–211 are enriched in polar residues; that stretch reads AEQTTEPASSTF. Residues 246 to 262 show a composition bias toward acidic residues; it reads DADDDFDEEDPDEDLCI.

This sequence belongs to the ELP5 family. As to quaternary structure, component of the elongator complex composed of Elp1, Elp2, Elp3, Elp4, Elp5 and Elp6. The elongator complex associates with and stabilizes microtubules; efficient interaction requires the full complex.

It localises to the cytoplasm. The protein resides in the nucleus. It is found in the cytoskeleton. Its subcellular location is the spindle. Its pathway is tRNA modification; 5-methoxycarbonylmethyl-2-thiouridine-tRNA biosynthesis. Functionally, component of the elongator complex, which is required for multiple tRNA modifications, including mcm5U (5-methoxycarbonylmethyl uridine), mcm5s2U (5-methoxycarbonylmethyl-2-thiouridine), and ncm5U (5-carbamoylmethyl uridine). The elongator complex catalyzes the formation of carboxymethyluridine in the wobble base at position 34 in tRNAs. Binding by the elongator complex stabilizes microtubules and promotes their growth. This induces central spindle asymmetry, promoting polarized signaling endosome trafficking during asymmetric cell division and cell fate assignation of sensory organ precursor cells. In Drosophila melanogaster (Fruit fly), this protein is Elongator complex protein 5.